A 347-amino-acid polypeptide reads, in one-letter code: Putative [LysW]-L-2-aminoadipate/[LysW]-L-glutamate phosphate reductase (347 aa).

Residue 9–12 (SGYI) participates in NADP(+) binding. Residue Cys-149 is part of the active site. Asn-314 serves as a coordination point for NADP(+).

Belongs to the NAGSA dehydrogenase family. Type 1 subfamily. LysY sub-subfamily.

It localises to the cytoplasm. The catalysed reaction is [amino-group carrier protein]-C-terminal-N-(1-carboxy-5-oxopentan-1-yl)-L-glutamine + phosphate + NADP(+) = [amino-group carrier protein]-C-terminal-N-(1-carboxy-5-phosphooxy-5-oxopentan-1-yl)-L-glutamine + NADPH + H(+). It catalyses the reaction [amino-group carrier protein]-C-terminal-gamma-(L-glutamyl-5-semialdehyde)-L-glutamate + phosphate + NADP(+) = [amino-group carrier protein]-C-terminal-gamma-(5-phospho-L-glutamyl)-L-glutamate + NADPH + H(+). It participates in amino-acid biosynthesis; L-lysine biosynthesis via AAA pathway; L-lysine from L-alpha-aminoadipate (Thermus route): step 3/5. The protein operates within amino-acid biosynthesis; L-arginine biosynthesis. Functionally, involved in both the arginine and lysine biosynthetic pathways. This is Putative [LysW]-L-2-aminoadipate/[LysW]-L-glutamate phosphate reductase from Picrophilus torridus (strain ATCC 700027 / DSM 9790 / JCM 10055 / NBRC 100828 / KAW 2/3).